A 498-amino-acid polypeptide reads, in one-letter code: Signal recognition particle receptor FtsY (498 aa).

2 disordered regions span residues 1–130 (MGLF…PNQS) and 147–200 (KVES…YNRS). The span at 36–46 (ALLAETAETAE) shows a compositional bias: low complexity. Polar residues predominate over residues 103 to 120 (SENSVAAVQNNTETMPSQ). GTP-binding positions include 301–308 (GVNGVGKT), 383–387 (DTAGR), and 447–450 (TKID).

It belongs to the GTP-binding SRP family. FtsY subfamily. Part of the signal recognition particle protein translocation system, which is composed of SRP and FtsY.

It localises to the cell membrane. The protein resides in the cytoplasm. The enzyme catalyses GTP + H2O = GDP + phosphate + H(+). Its function is as follows. Involved in targeting and insertion of nascent membrane proteins into the cytoplasmic membrane. Acts as a receptor for the complex formed by the signal recognition particle (SRP) and the ribosome-nascent chain (RNC). In Streptococcus mutans serotype c (strain ATCC 700610 / UA159), this protein is Signal recognition particle receptor FtsY.